The chain runs to 558 residues: Energy-dependent translational throttle protein EttA (558 aa).

ABC transporter domains lie at 6–256 and 322–552; these read YTMK…AVQG and VEVD…RVTH. 38 to 45 contributes to the ATP binding site; it reads GPNGAGKS. Residues 94–136 form an arm region; the sequence is GDIKIKLDRFNEVAELMATDYTDELMEEMGRLQEELDHADAWD. The ptIM stretch occupies residues 239–320; the sequence is GNYSTYLEKK…IPVGPRLGNV (82 aa). 354–361 is an ATP binding site; the sequence is GPNGVGKT.

The protein belongs to the ABC transporter superfamily. ABCF family. Translational throttle EttA subfamily. Monomer. Probably contacts ribosomal proteins L1, L5, L33 and S7, the 16S and 23S rRNA and the P-site containing tRNA(fMet).

The protein localises to the cytoplasm. The catalysed reaction is ATP + H2O = ADP + phosphate + H(+). Its function is as follows. A translation factor that gates the progression of the 70S ribosomal initiation complex (IC, containing tRNA(fMet) in the P-site) into the translation elongation cycle by using a mechanism sensitive to the ATP/ADP ratio. Binds to the 70S ribosome E-site where it modulates the state of the translating ribosome during subunit translocation. ATP hydrolysis probably frees it from the ribosome, which can enter the elongation phase. The sequence is that of Energy-dependent translational throttle protein EttA from Mycobacterium tuberculosis (strain CDC 1551 / Oshkosh).